A 224-amino-acid chain; its full sequence is Cytochrome c biogenesis ATP-binding export protein CcmA (224 aa).

In terms of domain architecture, ABC transporter spans 1–220; it reads MQNAEAAPAL…EYAHAEVVGA (220 aa). 40–47 lines the ATP pocket; that stretch reads GANGSGKT.

This sequence belongs to the ABC transporter superfamily. CcmA exporter (TC 3.A.1.107) family. As to quaternary structure, the complex is composed of two ATP-binding proteins (CcmA) and two transmembrane proteins (CcmB).

It is found in the cell inner membrane. It catalyses the reaction heme b(in) + ATP + H2O = heme b(out) + ADP + phosphate + H(+). In terms of biological role, part of the ABC transporter complex CcmAB involved in the biogenesis of c-type cytochromes; once thought to export heme, this seems not to be the case, but its exact role is uncertain. Responsible for energy coupling to the transport system. The chain is Cytochrome c biogenesis ATP-binding export protein CcmA from Bordetella parapertussis (strain 12822 / ATCC BAA-587 / NCTC 13253).